Here is a 298-residue protein sequence, read N- to C-terminus: Probable 3-mercaptopyruvate sulfurtransferase (298 aa).

The region spanning 24-141 is the Rhodanese 1 domain; the sequence is NAQKTVLLDA…WKTEGLELET (118 aa). The segment at 142 to 175 is hinge; the sequence is GEPRTPKPVVYEGAKLNKDLVASFDDIVKVIESP. S164 is subject to Phosphoserine. The Rhodanese 2 domain occupies 176–292; it reads DAAGVHIVDA…YGKRANEDSS (117 aa). R190 lines the substrate pocket. Catalysis depends on C252, which acts as the Cysteine persulfide intermediate.

It localises to the mitochondrion. It catalyses the reaction 2-oxo-3-sulfanylpropanoate + [thioredoxin]-dithiol = [thioredoxin]-disulfide + hydrogen sulfide + pyruvate + H(+). Functionally, required for formation of the 2-thio group of the 5-methoxycarbonylmethyl-2-thiouridine modified base in some tRNAs. In Schizosaccharomyces pombe (strain 972 / ATCC 24843) (Fission yeast), this protein is Probable 3-mercaptopyruvate sulfurtransferase (tum1).